The sequence spans 102 residues: Aspartyl/glutamyl-tRNA(Asn/Gln) amidotransferase subunit C (102 aa).

The protein belongs to the GatC family. As to quaternary structure, heterotrimer of A, B and C subunits.

The catalysed reaction is L-glutamyl-tRNA(Gln) + L-glutamine + ATP + H2O = L-glutaminyl-tRNA(Gln) + L-glutamate + ADP + phosphate + H(+). The enzyme catalyses L-aspartyl-tRNA(Asn) + L-glutamine + ATP + H2O = L-asparaginyl-tRNA(Asn) + L-glutamate + ADP + phosphate + 2 H(+). Functionally, allows the formation of correctly charged Asn-tRNA(Asn) or Gln-tRNA(Gln) through the transamidation of misacylated Asp-tRNA(Asn) or Glu-tRNA(Gln) in organisms which lack either or both of asparaginyl-tRNA or glutaminyl-tRNA synthetases. The reaction takes place in the presence of glutamine and ATP through an activated phospho-Asp-tRNA(Asn) or phospho-Glu-tRNA(Gln). The polypeptide is Aspartyl/glutamyl-tRNA(Asn/Gln) amidotransferase subunit C (Lactobacillus acidophilus (strain ATCC 700396 / NCK56 / N2 / NCFM)).